A 910-amino-acid chain; its full sequence is DNA mismatch repair protein MutS (910 aa).

Residue G615 to S622 participates in ATP binding.

Belongs to the DNA mismatch repair MutS family.

Its function is as follows. This protein is involved in the repair of mismatches in DNA. It is possible that it carries out the mismatch recognition step. This protein has a weak ATPase activity. The sequence is that of DNA mismatch repair protein MutS from Clostridium perfringens (strain ATCC 13124 / DSM 756 / JCM 1290 / NCIMB 6125 / NCTC 8237 / Type A).